The sequence spans 147 residues: Cytochrome c-type biogenesis protein CcmE (147 aa).

The Cytoplasmic portion of the chain corresponds to 1 to 9 (MKNLKKQRR). Residues 10–30 (IQVIALATVALVLSTALIGYA) form a helical; Signal-anchor for type II membrane protein membrane-spanning segment. Over 31-147 (MRDGINFFRA…EQGVYKGTEG (117 aa)) the chain is Periplasmic. Residues histidine 123 and tyrosine 127 each coordinate heme.

This sequence belongs to the CcmE/CycJ family.

Its subcellular location is the cell inner membrane. In terms of biological role, heme chaperone required for the biogenesis of c-type cytochromes. Transiently binds heme delivered by CcmC and transfers the heme to apo-cytochromes in a process facilitated by CcmF and CcmH. This Roseobacter denitrificans (strain ATCC 33942 / OCh 114) (Erythrobacter sp. (strain OCh 114)) protein is Cytochrome c-type biogenesis protein CcmE.